The chain runs to 482 residues: G patch domain-containing protein 2-like (482 aa).

Residues Ser-31, Ser-86, and Ser-88 each carry the phosphoserine modification. Thr-91 bears the Phosphothreonine mark. Disordered regions lie at residues 195–222 and 408–482; these read SQPGRKERMECEAEEQKHGSDENMSECD and KRKR…TNGC. Over residues 198 to 215 the composition is skewed to basic and acidic residues; the sequence is GRKERMECEAEEQKHGSD. A compositionally biased stretch (low complexity) spans 414–427; the sequence is VASASFSSPSPVHP. Residues 468-482 show a composition bias toward polar residues; the sequence is EKNSGCSSSPGTNGC.

This is G patch domain-containing protein 2-like (Gpatch2l) from Mus musculus (Mouse).